The following is a 142-amino-acid chain: MERTLLLVKPDGVNRGLSGEILGRMEKLGLKLIGLRMLQMDAVLADKHYAPHRARPFFKDLVTYITSGPITAAVFEGENAVEKMRKAMGATDPAKSEKGTVRGDLGINIEQNTVHGSDSAENAKHEISLFFSESELVNYDRR.

Residues Lys9, Phe57, Arg85, Thr91, Arg102, and Asn112 each coordinate ATP. Catalysis depends on His115, which acts as the Pros-phosphohistidine intermediate.

It belongs to the NDK family. Homotetramer. Mg(2+) serves as cofactor.

It is found in the cytoplasm. The enzyme catalyses a 2'-deoxyribonucleoside 5'-diphosphate + ATP = a 2'-deoxyribonucleoside 5'-triphosphate + ADP. The catalysed reaction is a ribonucleoside 5'-diphosphate + ATP = a ribonucleoside 5'-triphosphate + ADP. Major role in the synthesis of nucleoside triphosphates other than ATP. The ATP gamma phosphate is transferred to the NDP beta phosphate via a ping-pong mechanism, using a phosphorylated active-site intermediate. The chain is Nucleoside diphosphate kinase from Dehalococcoides mccartyi (strain CBDB1).